The primary structure comprises 264 residues: Energy-coupling factor transporter ATP-binding protein EcfA1 (264 aa).

Residues 2 to 234 form the ABC transporter domain; sequence IQVENLSFSY…DEFNPFLIKI (233 aa). 34 to 41 is a binding site for ATP; sequence GKNGSGKS.

It belongs to the ABC transporter superfamily. Energy-coupling factor EcfA family. Forms a stable energy-coupling factor (ECF) transporter complex composed of 2 membrane-embedded substrate-binding proteins (S component), 2 ATP-binding proteins (A component) and 2 transmembrane proteins (T component).

Its subcellular location is the cell inner membrane. Functionally, ATP-binding (A) component of a common energy-coupling factor (ECF) ABC-transporter complex. Unlike classic ABC transporters this ECF transporter provides the energy necessary to transport a number of different substrates. This chain is Energy-coupling factor transporter ATP-binding protein EcfA1, found in Fusobacterium nucleatum subsp. nucleatum (strain ATCC 25586 / DSM 15643 / BCRC 10681 / CIP 101130 / JCM 8532 / KCTC 2640 / LMG 13131 / VPI 4355).